The primary structure comprises 2767 residues: Serine/threonine-protein kinase ATM (2767 aa).

The FAT domain maps to Asn1713–Ala2317. The PI3K/PI4K catalytic domain occupies Trp2419–Met2734. The G-loop stretch occupies residues Gln2425 to Ala2431. The interval Gly2601 to Asn2609 is catalytic loop. Residues His2621–Thr2645 are activation loop. In terms of domain architecture, FATC spans Gly2735–Leu2767.

This sequence belongs to the PI3/PI4-kinase family. ATM subfamily.

It localises to the nucleus. The protein resides in the chromosome. The protein localises to the telomere. It carries out the reaction L-seryl-[protein] + ATP = O-phospho-L-seryl-[protein] + ADP + H(+). The enzyme catalyses L-threonyl-[protein] + ATP = O-phospho-L-threonyl-[protein] + ADP + H(+). Serine/threonine-protein kinase which recognizes the substrate consensus sequence [ST]-Q. Required to suppress spontaneous apoptosis of proliferating cells during development, and for their proper differentiation. Required for female fertility. Protects telomeres from fusion, maybe by recruiting or maintaining chromatin-modifying complexes such as Su(var)205/HP1. May activate checkpoint signaling in response to DNA double-stranded breaks induced by low-dose ionizing radiation. May phosphorylate histone H2AV. The chain is Serine/threonine-protein kinase ATM (tefu) from Drosophila melanogaster (Fruit fly).